The sequence spans 138 residues: Acidic phospholipase A2 (138 aa).

The first 16 residues, 1-16 (MRTLWIVAVLLLGVEG), serve as a signal peptide directing secretion. Disulfide bonds link cysteine 42/cysteine 131, cysteine 44/cysteine 60, cysteine 59/cysteine 111, cysteine 65/cysteine 138, cysteine 66/cysteine 104, cysteine 73/cysteine 97, and cysteine 91/cysteine 102. 3 residues coordinate Ca(2+): tyrosine 43, glycine 45, and glycine 47. Residue histidine 63 is part of the active site. Aspartate 64 contacts Ca(2+). Residue aspartate 105 is part of the active site.

It belongs to the phospholipase A2 family. Group II subfamily. D49 sub-subfamily. As to quaternary structure, homodimer. The cofactor is Ca(2+). In terms of tissue distribution, expressed by the venom gland.

It is found in the secreted. It catalyses the reaction a 1,2-diacyl-sn-glycero-3-phosphocholine + H2O = a 1-acyl-sn-glycero-3-phosphocholine + a fatty acid + H(+). PLA2 catalyzes the calcium-dependent hydrolysis of the 2-acyl groups in 3-sn-phosphoglycerides. This chain is Acidic phospholipase A2, found in Crotalus atrox (Western diamondback rattlesnake).